The primary structure comprises 395 residues: GPI-anchor transamidase (395 aa).

Positions 1–27 are cleaved as a signal peptide; sequence MVGTWFLCRGFTTLAGLLLLPFGSLAA. Residues 28–368 lie on the Lumenal side of the membrane; sequence SQIEDQAEQF…PKLKDWHPPG (341 aa). The Ca(2+) site is built by Asp-79, Ile-82, Glu-118, and Asp-120. The Proton donor role is filled by His-164. Residue Cys-206 is the Nucleophile; acyl-thioester intermediate of the active site. The a protein site is built by Cys-206, Ser-232, and Ser-234. Residues 231 to 236 are autoinhibitory loop; that stretch reads DSLSHQ. A disulfide bond links Cys-275 and Cys-280. The helical transmembrane segment at 369-385 threads the bilayer; it reads GFILGLWALIIMVFFKT. Over 386–395 the chain is Cytoplasmic; sequence YGIKHMKFIF.

Belongs to the peptidase C13 family. As to quaternary structure, heteropentamer. Part of the GPI-anchor transamidase complex, consisting of PIGK, PIGT, PIGS, PIGU and GAA1. Interacts with GPAA1. Interacts with PIGT; this interaction, via a disulfide link, stabilizes the expression of GAA1 and PIGK and links them to PIGS. Post-translationally, the disulfide bond between PIGK/GPI8 and PIGT is important for normal enzyme activity.

The protein localises to the endoplasmic reticulum membrane. It functions in the pathway glycolipid biosynthesis; glycosylphosphatidylinositol-anchor biosynthesis. In the absence of proproteins substrates, exists in an inactive state with a disrupted catalytic site by an autoinhibitory loop. The binding of proprotein substrates, particularly the CSP region, to GPI-T triggers concerted conformational changes that alleviate the inhibition by the autoinhibitory loop. Meanwhile, proprotein residues near the omega- site induce the formation of a catalytic cleft for catalysis, following which the products are released and GPI-T reverts to the inactive state. Its function is as follows. Catalytic subunit of the glycosylphosphatidylinositol-anchor (GPI-anchor) transamidase (GPI-T) complex that catalyzes the formation of the linkage between a proprotein and a GPI-anchor and participates in GPI anchored protein biosynthesis. Recognizes diverse proproteins at a C-terminal signal peptide (CSP) region that lacks consensus sequence and replaces it with a GPI-anchor via a transamidation reaction. Transamidation catalysis reaction follows a two-phase mechanism. In the acyl-enzyme phase, the carbonyl group of the proproteins's omega-site undergoes a nucleophilic attack forming an enzyme-substrate thioester bond. Followed by a general acid catalysis that allows CSP releasing, regenerating the carbonyl, and forming the acyl-enzyme intermediate. In the GPI-anchor attachment phase, the amino group of the GPI-anchor's ethanolamine phosphate, the one on third mannose (EtNP3), mediates a nucleophilic attack on the carbonyl of the acyl-enzyme intermediate, replacing the CSP, allowing GPI-anchor attachment to the omega-residue, therefore forming the product and freeing the enzyme. The chain is GPI-anchor transamidase from Sus scrofa (Pig).